The following is a 207-amino-acid chain: dITP/XTP pyrophosphatase (207 aa).

Position 16-21 (Ser-16–Lys-21) interacts with substrate. Asp-79 serves as the catalytic Proton acceptor. Position 79 (Asp-79) interacts with Mg(2+). Residues Ser-80, Phe-166–Asp-169, Lys-189, and His-194–Arg-195 each bind substrate.

The protein belongs to the HAM1 NTPase family. As to quaternary structure, homodimer. Mg(2+) is required as a cofactor.

The catalysed reaction is XTP + H2O = XMP + diphosphate + H(+). It catalyses the reaction dITP + H2O = dIMP + diphosphate + H(+). The enzyme catalyses ITP + H2O = IMP + diphosphate + H(+). In terms of biological role, pyrophosphatase that catalyzes the hydrolysis of nucleoside triphosphates to their monophosphate derivatives, with a high preference for the non-canonical purine nucleotides XTP (xanthosine triphosphate), dITP (deoxyinosine triphosphate) and ITP. Seems to function as a house-cleaning enzyme that removes non-canonical purine nucleotides from the nucleotide pool, thus preventing their incorporation into DNA/RNA and avoiding chromosomal lesions. The chain is dITP/XTP pyrophosphatase from Acinetobacter baumannii (strain ATCC 17978 / DSM 105126 / CIP 53.77 / LMG 1025 / NCDC KC755 / 5377).